Reading from the N-terminus, the 153-residue chain is TM2 domain-containing protein DDB_G0277895 (153 aa).

The TM2 domain occupies 3 to 50 (QKSVCVTYLLWLFFGLFGIHRFYLNRPCSGVLYLFTCGCFFIGWFIDI). 2 helical membrane-spanning segments follow: residues 6–26 (VCVT…RFYL) and 33–53 (VLYL…ICLI). Residues 85–153 (GSPQQQPYGA…GNYPPPYGPQ (69 aa)) are disordered. Tandem repeats lie at residues 89–96 (QQPYGAPP), 97–104 (QQPYGAPP), 105–112 (QQPYGAPP), 113–120 (QQPYGAPP), 121–128 (QQPYGAPP), and 129–136 (PQPYGAPP). Residues 89–136 (QQPYGAPPQQPYGAPPQQPYGAPPQQPYGAPPQQPYGAPPPQPYGAPP) are 6 X 8 AA tandem repeat of Q-Q-P-Y-G-A-P-P. Residues 93–153 (GAPPQQPYGA…GNYPPPYGPQ (61 aa)) are compositionally biased toward pro residues.

The protein belongs to the TM2 family.

It localises to the membrane. The chain is TM2 domain-containing protein DDB_G0277895 from Dictyostelium discoideum (Social amoeba).